The primary structure comprises 569 residues: Laccase-13 (569 aa).

Positions 1–21 (MEQLRPFFLLLAIFVASLVNA) are cleaved as a signal peptide. Plastocyanin-like domains follow at residues 29 to 145 (VIQE…PPLS) and 157 to 308 (REIT…YKDA). Residue Asn75 is glycosylated (N-linked (GlcNAc...) asparagine). Cu cation is bound by residues His79, His81, His124, and His126. 6 N-linked (GlcNAc...) asparagine glycosylation sites follow: Asn186, Asn296, Asn330, Asn381, Asn391, and Asn432. The Plastocyanin-like 3 domain occupies 418–553 (DFPPTPPVTF…AMVFLVENGE (136 aa)). Cu cation is bound by residues His470, His473, His475, His532, Cys533, His534, and His538.

Belongs to the multicopper oxidase family. Requires Cu cation as cofactor. Mostly expressed in roots. Also detected in leaves, stems and flowers but not in siliques.

It is found in the secreted. It localises to the extracellular space. The protein resides in the apoplast. The catalysed reaction is 4 hydroquinone + O2 = 4 benzosemiquinone + 2 H2O. Its function is as follows. Lignin degradation and detoxification of lignin-derived products. This Arabidopsis thaliana (Mouse-ear cress) protein is Laccase-13 (LAC13).